A 90-amino-acid polypeptide reads, in one-letter code: Translation initiation factor IF-1 (90 aa).

The region spanning 15 to 90 (KKQKRKKEEV…TLGRIVFRHK (76 aa)) is the S1-like domain.

This sequence belongs to the IF-1 family. As to quaternary structure, component of the 30S ribosomal translation pre-initiation complex which assembles on the 30S ribosome in the order IF-2 and IF-3, IF-1 and N-formylmethionyl-tRNA(fMet); mRNA recruitment can occur at any time during PIC assembly.

The protein localises to the cytoplasm. Its function is as follows. One of the essential components for the initiation of protein synthesis. Stabilizes the binding of IF-2 and IF-3 on the 30S subunit to which N-formylmethionyl-tRNA(fMet) subsequently binds. Helps modulate mRNA selection, yielding the 30S pre-initiation complex (PIC). Upon addition of the 50S ribosomal subunit IF-1, IF-2 and IF-3 are released leaving the mature 70S translation initiation complex. The polypeptide is Translation initiation factor IF-1 (Mycoplasma sp).